We begin with the raw amino-acid sequence, 357 residues long: DNA integrity scanning protein DisA (357 aa).

The 139-residue stretch at 8 to 146 (VKSIINILQL…GNLRYTLKDI (139 aa)) folds into the DAC domain. Residues Gly-75, Leu-93, and 106–110 (MRHRT) each bind ATP.

The protein belongs to the DisA family. Homooctamer. Requires Mg(2+) as cofactor.

It catalyses the reaction 2 ATP = 3',3'-c-di-AMP + 2 diphosphate. Its function is as follows. Participates in a DNA-damage check-point that is active prior to asymmetric division when DNA is damaged. DisA forms globular foci that rapidly scan along the chromosomes during sporulation, searching for lesions. When a lesion is present, DisA pauses at the lesion site. This triggers a cellular response that culminates in a temporary block in sporulation initiation. In terms of biological role, also has diadenylate cyclase activity, catalyzing the condensation of 2 ATP molecules into cyclic di-AMP (c-di-AMP). c-di-AMP acts as a signaling molecule that couples DNA integrity with progression of sporulation. The rise in c-di-AMP level generated by DisA while scanning the chromosome, operates as a positive signal that advances sporulation; upon encountering a lesion, the DisA focus arrests at the damaged site and halts c-di-AMP synthesis. This chain is DNA integrity scanning protein DisA, found in Bacillus cereus (strain B4264).